Here is a 915-residue protein sequence, read N- to C-terminus: Protein O-mannosyl-transferase TMTC3 (915 aa).

Residues 1 to 8 (MANINLKE) are Cytoplasmic-facing. A helical transmembrane segment spans residues 9-29 (ITLIVGVVTACYWNSLFCGFV). Over 30-93 (FDDVSAILDN…LSELKPMSYH (64 aa)) the chain is Extracellular. A helical membrane pass occupies residues 94 to 114 (LLNMIFHAVVSVIFLKVCKLF). Topologically, residues 115–120 (LDNKSS) are cytoplasmic. 2 helical membrane passes run 121–139 (VIAS…AVTG) and 140–158 (VVGR…AFLS). Residues 159–166 (YTRSKGPD) are Cytoplasmic-facing. A helical transmembrane segment spans residues 167-187 (NSIIWTPIALTVFLVAVATLC). Topologically, residues 188 to 193 (KEQGIT) are extracellular. The helical transmembrane segment at 194–214 (VVGICCVYEVFIAQGYTLPLL) threads the bilayer. Residues 215-231 (CTTAGQFLRGKGSIPFS) lie on the Cytoplasmic side of the membrane. Residues 232–252 (MLQTLVKLIVLMFSTLLLVVI) form a helical membrane-spanning segment. The Extracellular portion of the chain corresponds to 253–317 (RVQVIQSQLP…TIPLIESLLD (65 aa)). A helical membrane pass occupies residues 318-338 (IRNLATFTFFCFLGMLGVFSI). Topologically, residues 339–353 (RYSGDSSKTVLMALC) are cytoplasmic. The chain crosses the membrane as a helical span at residues 354 to 374 (LMALPFIPASNLFFPVGFVVA). Residues 375–376 (ER) are Extracellular-facing. Residues 377–397 (VLYVPSMGFCILVAHGWQKIS) form a helical membrane-spanning segment. At 398–404 (TKSVFKK) the chain is on the cytoplasmic side. Residues 405-423 (LSWICLSMVILTHSLKTFH) traverse the membrane as a helical segment. The Extracellular portion of the chain corresponds to 424–915 (RNWDWESEYT…EEIERILNGE (492 aa)). TPR repeat units lie at residues 446 to 479 (AKLW…QPDD), 480 to 513 (IGAH…MPQI), 529 to 562 (NVYI…RPDF), 563 to 596 (KQAY…DRNN), 597 to 631 (ADLW…NPKH), 669 to 702 (ANGY…QADF), 703 to 736 (RSAL…YPDH), 738 to 771 (KGLI…DPSN), and 772 to 805 (VQGK…APHE). N-linked (GlcNAc...) asparagine glycosylation is present at asparagine 494. Residue tyrosine 503 is modified to Phosphotyrosine. N-linked (GlcNAc...) asparagine glycosylation is present at asparagine 541. The tract at residues 848 to 892 (KEIRGESRQTQIVKTSDNKSQSKSNKQLGKNGDEETPHKTTKDIK) is disordered. The N-linked (GlcNAc...) asparagine glycan is linked to asparagine 865. Residues 865-874 (NKSQSKSNKQ) are compositionally biased toward low complexity. A compositionally biased stretch (basic and acidic residues) spans 878-892 (NGDEETPHKTTKDIK).

This sequence belongs to the TMTC family.

It is found in the membrane. Its subcellular location is the endoplasmic reticulum. The enzyme catalyses a di-trans,poly-cis-dolichyl beta-D-mannosyl phosphate + L-seryl-[protein] = 3-O-(alpha-D-mannosyl)-L-seryl-[protein] + a di-trans,poly-cis-dolichyl phosphate + H(+). It carries out the reaction a di-trans,poly-cis-dolichyl beta-D-mannosyl phosphate + L-threonyl-[protein] = 3-O-(alpha-D-mannosyl)-L-threonyl-[protein] + a di-trans,poly-cis-dolichyl phosphate + H(+). The protein operates within protein modification; protein glycosylation. Transfers mannosyl residues to the hydroxyl group of serine or threonine residues. The 4 members of the TMTC family are O-mannosyl-transferases dedicated primarily to the cadherin superfamily, each member seems to have a distinct role in decorating the cadherin domains with O-linked mannose glycans at specific regions. Also acts as O-mannosyl-transferase on other proteins such as PDIA3. Involved in the positive regulation of proteasomal protein degradation in the endoplasmic reticulum (ER), and the control of ER stress response. This is Protein O-mannosyl-transferase TMTC3 from Homo sapiens (Human).